The following is a 150-amino-acid chain: SsrA-binding protein (150 aa).

Residues 129 to 150 (ETEKQRDWQREKSRIMKGGSKE) form a disordered region.

Belongs to the SmpB family.

It localises to the cytoplasm. In terms of biological role, required for rescue of stalled ribosomes mediated by trans-translation. Binds to transfer-messenger RNA (tmRNA), required for stable association of tmRNA with ribosomes. tmRNA and SmpB together mimic tRNA shape, replacing the anticodon stem-loop with SmpB. tmRNA is encoded by the ssrA gene; the 2 termini fold to resemble tRNA(Ala) and it encodes a 'tag peptide', a short internal open reading frame. During trans-translation Ala-aminoacylated tmRNA acts like a tRNA, entering the A-site of stalled ribosomes, displacing the stalled mRNA. The ribosome then switches to translate the ORF on the tmRNA; the nascent peptide is terminated with the 'tag peptide' encoded by the tmRNA and targeted for degradation. The ribosome is freed to recommence translation, which seems to be the essential function of trans-translation. The polypeptide is SsrA-binding protein (Cupriavidus pinatubonensis (strain JMP 134 / LMG 1197) (Cupriavidus necator (strain JMP 134))).